A 229-amino-acid polypeptide reads, in one-letter code: Ribonuclease 3 (229 aa).

One can recognise an RNase III domain in the interval 8–130 (LTELEKIVGY…IIGAIYLDSD (123 aa)). Residue E43 participates in Mg(2+) binding. Residue D47 is part of the active site. Positions 116 and 119 each coordinate Mg(2+). E119 is an active-site residue. Residues 157 to 227 (DPKTRLQELL…ATAALEHLQE (71 aa)) enclose the DRBM domain. Residues 201–229 (SPFKGTGTSRRKAEQAAATAALEHLQESA) are disordered.

It belongs to the ribonuclease III family. Homodimer. The cofactor is Mg(2+).

It is found in the cytoplasm. It carries out the reaction Endonucleolytic cleavage to 5'-phosphomonoester.. In terms of biological role, digests double-stranded RNA. Involved in the processing of primary rRNA transcript to yield the immediate precursors to the large and small rRNAs (23S and 16S). Processes some mRNAs, and tRNAs when they are encoded in the rRNA operon. Processes pre-crRNA and tracrRNA of type II CRISPR loci if present in the organism. This Idiomarina loihiensis (strain ATCC BAA-735 / DSM 15497 / L2-TR) protein is Ribonuclease 3.